Here is a 320-residue protein sequence, read N- to C-terminus: o-succinylbenzoate synthase (320 aa).

The Proton donor role is filled by K133. Mg(2+) contacts are provided by D161, E190, and D213. The active-site Proton acceptor is the K235.

The protein belongs to the mandelate racemase/muconate lactonizing enzyme family. MenC type 1 subfamily. A divalent metal cation serves as cofactor.

The enzyme catalyses (1R,6R)-6-hydroxy-2-succinyl-cyclohexa-2,4-diene-1-carboxylate = 2-succinylbenzoate + H2O. Its pathway is quinol/quinone metabolism; 1,4-dihydroxy-2-naphthoate biosynthesis; 1,4-dihydroxy-2-naphthoate from chorismate: step 4/7. It functions in the pathway quinol/quinone metabolism; menaquinone biosynthesis. Its function is as follows. Converts 2-succinyl-6-hydroxy-2,4-cyclohexadiene-1-carboxylate (SHCHC) to 2-succinylbenzoate (OSB). In Citrobacter koseri (strain ATCC BAA-895 / CDC 4225-83 / SGSC4696), this protein is o-succinylbenzoate synthase.